The following is an 867-amino-acid chain: Alanine--tRNA ligase (867 aa).

Positions 558, 562, 660, and 664 each coordinate Zn(2+).

This sequence belongs to the class-II aminoacyl-tRNA synthetase family. It depends on Zn(2+) as a cofactor.

The protein localises to the cytoplasm. It catalyses the reaction tRNA(Ala) + L-alanine + ATP = L-alanyl-tRNA(Ala) + AMP + diphosphate. In terms of biological role, catalyzes the attachment of alanine to tRNA(Ala) in a two-step reaction: alanine is first activated by ATP to form Ala-AMP and then transferred to the acceptor end of tRNA(Ala). Also edits incorrectly charged Ser-tRNA(Ala) and Gly-tRNA(Ala) via its editing domain. This Fervidobacterium nodosum (strain ATCC 35602 / DSM 5306 / Rt17-B1) protein is Alanine--tRNA ligase.